The sequence spans 271 residues: Ribosomal RNA small subunit methyltransferase I (271 aa).

The protein belongs to the methyltransferase superfamily. RsmI family.

The protein resides in the cytoplasm. The enzyme catalyses cytidine(1402) in 16S rRNA + S-adenosyl-L-methionine = 2'-O-methylcytidine(1402) in 16S rRNA + S-adenosyl-L-homocysteine + H(+). Functionally, catalyzes the 2'-O-methylation of the ribose of cytidine 1402 (C1402) in 16S rRNA. This chain is Ribosomal RNA small subunit methyltransferase I, found in Campylobacter fetus subsp. fetus (strain 82-40).